The following is a 1520-amino-acid chain: Myosin-5 (1520 aa).

The region spanning 7-56 is the Myosin N-terminal SH3-like domain; that stretch reads IVGSHVWVEDPHLAWIDGEVTRIDGINVHVKTKKGKTVVTNVYFPKDTEA. The Myosin motor domain maps to 59-729; it reads GGVDDMTKLS…QMAELDARRA (671 aa). ATP-binding positions include 153 to 160 and 206 to 214; these read GESGAGKT and NNNSSRFGK. Actin-binding regions lie at residues 492-526, 528-551, 586-610, and 610-632; these read LIEK…FQTF, EHER…AGEV, FHAL…KQQL, and LHSL…KPNN. IQ domains follow at residues 732–761, 755–784, 780–809, 803–832, 828–857, and 851–880; these read LGNA…AAIV, IRNA…EAAA, IEAA…STIV, TRSS…RKAA, QRKA…AAIV, and LQKA…AARD. Residues 881 to 1047 adopt a coiled-coil conformation; the sequence is TGALKDAKNK…ESENKVLRQQ (167 aa). Residues 1062-1100 form a disordered region; that stretch reads PKTTIIQRTPEKDTFSNGETTQLQEPETEDRPQKSLNQK. The segment covering 1076–1086 has biased composition (polar residues); the sequence is FSNGETTQLQE. A Dilute domain is found at 1148–1463; it reads NRIIETIASA…IATMRAEVSD (316 aa).

The protein belongs to the TRAFAC class myosin-kinesin ATPase superfamily. Myosin family. Plant myosin class XI subfamily. Homodimer. Interacts with MYOB1 and MYOB2. Interacts with PHOX1.

The protein localises to the cytoplasm. Functionally, myosin heavy chain that is required for the cell cycle-regulated transport of various organelles and proteins for their segregation. Functions by binding with its tail domain to receptor proteins on organelles and exerting force with its N-terminal motor domain against actin filaments, thereby transporting its cargo along polarized actin cables. Contributes to the trafficking of Golgi stacks, mitochondria and peroxisomes. Required for development of pavement cells, trichomes, and stigmatic papillae. The chain is Myosin-5 (XI-1) from Arabidopsis thaliana (Mouse-ear cress).